Consider the following 131-residue polypeptide: D-ribose pyranase (131 aa).

The active-site Proton donor is histidine 20. Substrate contacts are provided by residues aspartate 28, histidine 98, and 120-122 (YAN).

It belongs to the RbsD / FucU family. RbsD subfamily. As to quaternary structure, homodecamer.

It is found in the cytoplasm. It carries out the reaction beta-D-ribopyranose = beta-D-ribofuranose. It functions in the pathway carbohydrate metabolism; D-ribose degradation; D-ribose 5-phosphate from beta-D-ribopyranose: step 1/2. Its function is as follows. Catalyzes the interconversion of beta-pyran and beta-furan forms of D-ribose. This is D-ribose pyranase from Clostridium perfringens (strain ATCC 13124 / DSM 756 / JCM 1290 / NCIMB 6125 / NCTC 8237 / Type A).